The primary structure comprises 200 residues: TATA-box-binding protein (200 aa).

A run of 2 repeats spans residues 25 to 101 and 115 to 192.

Belongs to the TBP family. Belongs to the TFIID complex together with the TBP-associated factors (TAFs). Binds DNA as monomer.

The protein localises to the nucleus. In terms of biological role, general transcription factor that functions at the core of the DNA-binding multiprotein factor TFIID. Binding of TFIID to the TATA box is the initial transcriptional step of the pre-initiation complex (PIC), playing a role in the activation of eukaryotic genes transcribed by RNA polymerase II. The protein is TATA-box-binding protein of Nicotiana tabacum (Common tobacco).